Here is a 362-residue protein sequence, read N- to C-terminus: UDP-N-acetylglucosamine--N-acetylmuramyl-(pentapeptide) pyrophosphoryl-undecaprenol N-acetylglucosamine transferase (362 aa).

UDP-N-acetyl-alpha-D-glucosamine contacts are provided by residues 14–16, asparagine 122, arginine 163, serine 190, and glutamine 285; that span reads TGG.

Belongs to the glycosyltransferase 28 family. MurG subfamily.

It is found in the cell inner membrane. It carries out the reaction di-trans,octa-cis-undecaprenyl diphospho-N-acetyl-alpha-D-muramoyl-L-alanyl-D-glutamyl-meso-2,6-diaminopimeloyl-D-alanyl-D-alanine + UDP-N-acetyl-alpha-D-glucosamine = di-trans,octa-cis-undecaprenyl diphospho-[N-acetyl-alpha-D-glucosaminyl-(1-&gt;4)]-N-acetyl-alpha-D-muramoyl-L-alanyl-D-glutamyl-meso-2,6-diaminopimeloyl-D-alanyl-D-alanine + UDP + H(+). Its pathway is cell wall biogenesis; peptidoglycan biosynthesis. In terms of biological role, cell wall formation. Catalyzes the transfer of a GlcNAc subunit on undecaprenyl-pyrophosphoryl-MurNAc-pentapeptide (lipid intermediate I) to form undecaprenyl-pyrophosphoryl-MurNAc-(pentapeptide)GlcNAc (lipid intermediate II). The sequence is that of UDP-N-acetylglucosamine--N-acetylmuramyl-(pentapeptide) pyrophosphoryl-undecaprenol N-acetylglucosamine transferase from Prochlorococcus marinus (strain MIT 9215).